The chain runs to 348 residues: Nicotinate-nucleotide--dimethylbenzimidazole phosphoribosyltransferase (348 aa).

Glu-316 acts as the Proton acceptor in catalysis.

Belongs to the CobT family.

The catalysed reaction is 5,6-dimethylbenzimidazole + nicotinate beta-D-ribonucleotide = alpha-ribazole 5'-phosphate + nicotinate + H(+). Its pathway is nucleoside biosynthesis; alpha-ribazole biosynthesis; alpha-ribazole from 5,6-dimethylbenzimidazole: step 1/2. Catalyzes the synthesis of alpha-ribazole-5'-phosphate from nicotinate mononucleotide (NAMN) and 5,6-dimethylbenzimidazole (DMB). This Xanthomonas oryzae pv. oryzae (strain PXO99A) protein is Nicotinate-nucleotide--dimethylbenzimidazole phosphoribosyltransferase.